A 415-amino-acid chain; its full sequence is MNIDQHHQLQQQHQQQMLQQQAQAQAQAQAQAQQQQQAAAAAAAANAAATTSSSPRQVSFNVSDHYQILEIVGEGAYGIVCSAIHKPSQQKVAIKKIEPFERSMLCLRTLRELKLLKHFNHENIISILAIQRPINYESFNEIYLIQELMETDLHRVIRTQNLSDDHIQYFIYQTLRALKAMHSANVLHRDLKPSNLLLNSNCDLKICDFGLARSIASQEDNYGFMTEYVATRWYRAPEIMLTFQEYTTAIDVWSVGCILAEMLSGRPLFPGRDYHNQLWLIMEVLGTPNMEDYYNIKSKRAREYIRSLPFCKKIPFSELFANTNNNTSTSNTGGRTNINPLALDLLEKLLIFNPAKRITVEDALKHPYLQLYHDPNDEPISDKIPEDFFDFDKMKDQLTIEDLKKLLYEEIMKPL.

The region spanning 66-369 is the Protein kinase domain; that stretch reads YQILEIVGEG…VEDALKHPYL (304 aa). ATP-binding positions include 72 to 80 and Lys95; that span reads VGEGAYGIV. The active-site Proton acceptor is Asp190. The residue at position 226 (Thr226) is a Phosphothreonine. A TXY motif is present at residues 226-228; it reads TEY. Tyr228 is subject to Phosphotyrosine.

Belongs to the protein kinase superfamily. CMGC Ser/Thr protein kinase family. MAP kinase subfamily. Mg(2+) serves as cofactor. In terms of processing, dually phosphorylated on Thr-226 and Tyr-228, which activates the enzyme.

It carries out the reaction L-seryl-[protein] + ATP = O-phospho-L-seryl-[protein] + ADP + H(+). The catalysed reaction is L-threonyl-[protein] + ATP = O-phospho-L-threonyl-[protein] + ADP + H(+). Its activity is regulated as follows. Activated by tyrosine and threonine phosphorylation. The sequence is that of Extracellular signal-regulated kinase 1 (CEK1) from Candida albicans (strain WO-1) (Yeast).